The primary structure comprises 55 residues: Photosystem II reaction center protein K (55 aa).

The propeptide occupies 1 to 18; sequence MFYIHLENTFDLSSTILV. A helical transmembrane segment spans residues 26–46; it reads IFDPIVDVMPIIPLFFFLLAF.

This sequence belongs to the PsbK family. In terms of assembly, PSII is composed of 1 copy each of membrane proteins PsbA, PsbB, PsbC, PsbD, PsbE, PsbF, PsbH, PsbI, PsbJ, PsbK, PsbL, PsbM, PsbT, PsbX, PsbY, PsbZ, Psb30/Ycf12, at least 3 peripheral proteins of the oxygen-evolving complex and a large number of cofactors. It forms dimeric complexes.

Its subcellular location is the plastid. The protein localises to the chloroplast thylakoid membrane. One of the components of the core complex of photosystem II (PSII). PSII is a light-driven water:plastoquinone oxidoreductase that uses light energy to abstract electrons from H(2)O, generating O(2) and a proton gradient subsequently used for ATP formation. It consists of a core antenna complex that captures photons, and an electron transfer chain that converts photonic excitation into a charge separation. The protein is Photosystem II reaction center protein K of Anthoceros angustus (Hornwort).